A 186-amino-acid polypeptide reads, in one-letter code: Threonylcarbamoyl-AMP synthase (186 aa).

The 185-residue stretch at 2 to 186 folds into the YrdC-like domain; sequence PNEFELAVAA…ARTGAIIRPS (185 aa).

The protein belongs to the SUA5 family. TsaC subfamily.

It localises to the cytoplasm. It catalyses the reaction L-threonine + hydrogencarbonate + ATP = L-threonylcarbamoyladenylate + diphosphate + H2O. Its function is as follows. Required for the formation of a threonylcarbamoyl group on adenosine at position 37 (t(6)A37) in tRNAs that read codons beginning with adenine. Catalyzes the conversion of L-threonine, HCO(3)(-)/CO(2) and ATP to give threonylcarbamoyl-AMP (TC-AMP) as the acyladenylate intermediate, with the release of diphosphate. In Aeromonas hydrophila subsp. hydrophila (strain ATCC 7966 / DSM 30187 / BCRC 13018 / CCUG 14551 / JCM 1027 / KCTC 2358 / NCIMB 9240 / NCTC 8049), this protein is Threonylcarbamoyl-AMP synthase.